Reading from the N-terminus, the 454-residue chain is Probable DNA primase large subunit (454 aa).

The [4Fe-4S] cluster site is built by cysteine 280, cysteine 359, cysteine 375, and cysteine 415.

This sequence belongs to the eukaryotic-type primase large subunit family. In terms of assembly, heterodimer of a small subunit and a large subunit. [4Fe-4S] cluster is required as a cofactor.

Its function is as follows. DNA primase is the polymerase that synthesizes small RNA primers for the Okazaki fragments made during discontinuous DNA replication. This is Probable DNA primase large subunit from Arabidopsis thaliana (Mouse-ear cress).